The following is a 108-amino-acid chain: Large ribosomal subunit protein eL36x (108 aa).

Disordered regions lie at residues Gly13–Lys34 and Lys75–Lys108. Basic residues predominate over residues Lys75 to Arg84.

Belongs to the eukaryotic ribosomal protein eL36 family.

The chain is Large ribosomal subunit protein eL36x (RPL36C) from Arabidopsis thaliana (Mouse-ear cress).